The sequence spans 447 residues: Drebrin-like protein A (447 aa).

Residues 2-133 (SVNLSKNGAA…EPESIMEKVA (132 aa)) form the ADF-H domain. 2 disordered regions span residues 141–160 (NFHKESKRGNEGPQGPVGSV) and 184–368 (KDEE…TENQ). Positions 180 to 245 (AKAEKDEEER…EQEETEKQQT (66 aa)) form a coiled coil. Residues 184–242 (KDEEERRMEENRRANSEKDRLERERKEREQREAETREQRFRERAKEIDAQRKEQEETEK) are compositionally biased toward basic and acidic residues. The span at 246–255 (VPASQRSVNP) shows a compositional bias: polar residues. The span at 319–328 (PESPVPPVSH) shows a compositional bias: pro residues. The segment covering 345–365 (QEEENIYQDATEDQNIYEDTT) has biased composition (acidic residues). Residues 388 to 447 (EKGVCARALYDYQAADDTEISFDPDDLITQIQFIDEGWWRGFSPAGHFGMFPANYVELLE) form the SH3 domain.

This sequence belongs to the ABP1 family.

It is found in the cytoplasm. The protein resides in the cytoskeleton. It localises to the cell projection. Its subcellular location is the lamellipodium. The protein localises to the ruffle. It is found in the cell cortex. The protein resides in the cytosol. It localises to the synapse. Its subcellular location is the perikaryon. The protein localises to the neuron projection. It is found in the cell membrane. The protein resides in the cytoplasmic vesicle. It localises to the clathrin-coated vesicle membrane. Its subcellular location is the golgi apparatus membrane. The protein localises to the podosome. It is found in the early endosome. The protein resides in the dendrite. It localises to the postsynaptic density. In terms of biological role, adapter protein that binds F-actin and dynamin, and thereby plays a role in receptor-mediated endocytosis. Plays a role in the reorganization of the actin cytoskeleton, formation of cell projections, such as neurites, in neuron morphogenesis and synapse formation. Does not bind G-actin and promote actin polymerization by itself, but excerts its functions by interaction with other proteins. Required for the formation of organized podosome rosettes. The protein is Drebrin-like protein A (dbnl-a) of Xenopus laevis (African clawed frog).